Consider the following 430-residue polypeptide: Adenylosuccinate synthetase (430 aa).

GTP-binding positions include 12 to 18 and 40 to 42; these read GDEGKGK and GHT. The active-site Proton acceptor is the D13. Residues D13 and G40 each coordinate Mg(2+). IMP contacts are provided by residues 13-16, 38-41, T128, R142, Q223, T238, and R302; these read DEGK and NAGH. H41 serves as the catalytic Proton donor. 298 to 304 is a binding site for substrate; it reads TTTGRPR. Residues R304, 330-332, and 412-414 contribute to the GTP site; these read SID and SVG.

Belongs to the adenylosuccinate synthetase family. As to quaternary structure, homodimer. Mg(2+) serves as cofactor.

It localises to the cytoplasm. It carries out the reaction IMP + L-aspartate + GTP = N(6)-(1,2-dicarboxyethyl)-AMP + GDP + phosphate + 2 H(+). Its pathway is purine metabolism; AMP biosynthesis via de novo pathway; AMP from IMP: step 1/2. Its function is as follows. Plays an important role in the de novo pathway of purine nucleotide biosynthesis. Catalyzes the first committed step in the biosynthesis of AMP from IMP. This chain is Adenylosuccinate synthetase, found in Streptococcus pyogenes serotype M1.